Reading from the N-terminus, the 124-residue chain is MPTINQLVRQGRKKSVKKTNTPALKGCPQKRGVCVRVYTTTPKKPNSALRKVARVRLTNGIEVTSYIPGIGHNLQEHSVVMIRGGRVKDLPGVRYHVIRGTLDTLGVSDRRQGRSKYGAKKPSK.

Positions 1–24 (MPTINQLVRQGRKKSVKKTNTPAL) are disordered. Asp89 carries the 3-methylthioaspartic acid modification.

Belongs to the universal ribosomal protein uS12 family. In terms of assembly, part of the 30S ribosomal subunit. Contacts proteins S8 and S17. May interact with IF1 in the 30S initiation complex.

In terms of biological role, with S4 and S5 plays an important role in translational accuracy. Its function is as follows. Interacts with and stabilizes bases of the 16S rRNA that are involved in tRNA selection in the A site and with the mRNA backbone. Located at the interface of the 30S and 50S subunits, it traverses the body of the 30S subunit contacting proteins on the other side and probably holding the rRNA structure together. The combined cluster of proteins S8, S12 and S17 appears to hold together the shoulder and platform of the 30S subunit. The sequence is that of Small ribosomal subunit protein uS12 from Desulfotalea psychrophila (strain LSv54 / DSM 12343).